The primary structure comprises 135 residues: U-myrmeciitoxin(01)-Mg7a (135 aa).

Residues Met1–Ser21 form the signal peptide. The propeptide occupies Pro22–Ala72. Residues Glu69–Ile95 are disordered. Basic residues predominate over residues Ser75 to Ile93. An O-linked (GalNAc...) serine glycan is attached at Ser120. Residues Thr129 and Thr130 are each glycosylated (O-linked (GalNAc...) threonine).

This sequence belongs to the formicidae venom precursor-01 superfamily. In terms of processing, glycosylation is critical to maintaining the aqueous solubility of this protein, but does not directly contribute to its activity. Expressed by the venom gland.

The protein resides in the secreted. Its subcellular location is the target cell membrane. In terms of biological role, neurotoxin that triggers pain behavior and inflammation in mammals, and is paralytic and lethal to insects. Causes a time-dependent increase in cell leak current. May act by targeting membranes. This is U-myrmeciitoxin(01)-Mg7a from Myrmecia gulosa (Red bulldog ant).